A 382-amino-acid chain; its full sequence is Alanine racemase 1 (382 aa).

Lys39 (proton acceptor; specific for D-alanine) is an active-site residue. Lys39 carries the post-translational modification N6-(pyridoxal phosphate)lysine. Arg138 is a substrate binding site. Catalysis depends on Tyr265, which acts as the Proton acceptor; specific for L-alanine. Residue Met312 coordinates substrate.

It belongs to the alanine racemase family. It depends on pyridoxal 5'-phosphate as a cofactor.

It catalyses the reaction L-alanine = D-alanine. The protein operates within amino-acid biosynthesis; D-alanine biosynthesis; D-alanine from L-alanine: step 1/1. Its function is as follows. Catalyzes the interconversion of L-alanine and D-alanine. May also act on other amino acids. In Staphylococcus aureus (strain NCTC 8325 / PS 47), this protein is Alanine racemase 1 (alr1).